Reading from the N-terminus, the 125-residue chain is Cyclin-dependent protein kinase inhibitor SMR16 (125 aa).

Probable cyclin-dependent protein kinase (CDK) inhibitor that functions as a repressor of mitosis in the endoreduplication cell cycle. In Arabidopsis thaliana (Mouse-ear cress), this protein is Cyclin-dependent protein kinase inhibitor SMR16.